We begin with the raw amino-acid sequence, 547 residues long: Chaperonin GroEL (547 aa).

ATP is bound by residues 30–33, Lys-51, 87–91, Gly-415, 479–481, and Asp-495; these read TLGP, DGTTT, and NAA.

It belongs to the chaperonin (HSP60) family. As to quaternary structure, forms a cylinder of 14 subunits composed of two heptameric rings stacked back-to-back. Interacts with the co-chaperonin GroES.

Its subcellular location is the cytoplasm. It catalyses the reaction ATP + H2O + a folded polypeptide = ADP + phosphate + an unfolded polypeptide.. In terms of biological role, together with its co-chaperonin GroES, plays an essential role in assisting protein folding. The GroEL-GroES system forms a nano-cage that allows encapsulation of the non-native substrate proteins and provides a physical environment optimized to promote and accelerate protein folding. In Bordetella pertussis (strain Tohama I / ATCC BAA-589 / NCTC 13251), this protein is Chaperonin GroEL.